The primary structure comprises 64 residues: Large ribosomal subunit protein uL30 (64 aa).

Residues 1–22 form a disordered region; that stretch reads MAKAAKTIKVEQTRSAIRRQHS.

It belongs to the universal ribosomal protein uL30 family. In terms of assembly, part of the 50S ribosomal subunit.

The chain is Large ribosomal subunit protein uL30 from Nitrobacter hamburgensis (strain DSM 10229 / NCIMB 13809 / X14).